Reading from the N-terminus, the 260-residue chain is Beta-lactamase SHV-6 (260 aa).

The N-terminal stretch at 1-11 is a signal peptide; it reads LLATLPLAVHA. S56 serves as the catalytic Acyl-ester intermediate. C63 and C109 are oxidised to a cystine. E154 acts as the Proton acceptor in catalysis. Residue 220-222 participates in substrate binding; that stretch reads KTG.

Belongs to the class-A beta-lactamase family.

The enzyme catalyses a beta-lactam + H2O = a substituted beta-amino acid. SHV enzymes hydrolyze broad spectrum cephalosporins notably cefotaxime and ceftazidime. The chain is Beta-lactamase SHV-6 (bla) from Klebsiella pneumoniae.